A 131-amino-acid chain; its full sequence is Small ribosomal subunit protein uS8 (131 aa).

Belongs to the universal ribosomal protein uS8 family. Part of the 30S ribosomal subunit. Contacts proteins S5 and S12.

In terms of biological role, one of the primary rRNA binding proteins, it binds directly to 16S rRNA central domain where it helps coordinate assembly of the platform of the 30S subunit. The protein is Small ribosomal subunit protein uS8 of Janthinobacterium sp. (strain Marseille) (Minibacterium massiliensis).